The following is a 213-amino-acid chain: Phosphatidylserine decarboxylase proenzyme (213 aa).

The active-site Schiff-base intermediate with substrate; via pyruvic acid is the Ser-182. Pyruvic acid (Ser); by autocatalysis is present on Ser-182.

The protein belongs to the phosphatidylserine decarboxylase family. PSD-A subfamily. As to quaternary structure, heterodimer of a large membrane-associated beta subunit and a small pyruvoyl-containing alpha subunit. The cofactor is pyruvate. In terms of processing, is synthesized initially as an inactive proenzyme. Formation of the active enzyme involves a self-maturation process in which the active site pyruvoyl group is generated from an internal serine residue via an autocatalytic post-translational modification. Two non-identical subunits are generated from the proenzyme in this reaction, and the pyruvate is formed at the N-terminus of the alpha chain, which is derived from the carboxyl end of the proenzyme. The post-translation cleavage follows an unusual pathway, termed non-hydrolytic serinolysis, in which the side chain hydroxyl group of the serine supplies its oxygen atom to form the C-terminus of the beta chain, while the remainder of the serine residue undergoes an oxidative deamination to produce ammonia and the pyruvoyl prosthetic group on the alpha chain.

It is found in the cell membrane. The enzyme catalyses a 1,2-diacyl-sn-glycero-3-phospho-L-serine + H(+) = a 1,2-diacyl-sn-glycero-3-phosphoethanolamine + CO2. The protein operates within phospholipid metabolism; phosphatidylethanolamine biosynthesis; phosphatidylethanolamine from CDP-diacylglycerol: step 2/2. Catalyzes the formation of phosphatidylethanolamine (PtdEtn) from phosphatidylserine (PtdSer). This is Phosphatidylserine decarboxylase proenzyme from Geotalea daltonii (strain DSM 22248 / JCM 15807 / FRC-32) (Geobacter daltonii).